Consider the following 304-residue polypeptide: Cell surface-binding protein OPG105 (304 aa).

An Alpha-carbonic anhydrase domain is found at 1–235 (MPQQLSPINI…NDDTQVYYSG (235 aa)). Over 1 to 275 (MPQQLSPINI…YQKYIEGNKT (275 aa)) the chain is Virion surface. The chain crosses the membrane as a helical span at residues 276–294 (FAIIAIVFVFILTAILFLM). Residues 295–304 (SRRYSREKQN) lie on the Intravirion side of the membrane.

The protein belongs to the alpha-carbonic anhydrase family. In terms of assembly, homodimer; disulfide-linked. Apparently non-glycosylated.

Its subcellular location is the virion membrane. Functionally, binds to chondroitin sulfate on the cell surface to provide virion attachment to target cell. This is Cell surface-binding protein OPG105 (OPG105) from Rabbitpox virus (strain Utrecht) (RPV).